A 694-amino-acid chain; its full sequence is E3 ubiquitin-protein ligase RNF169 (694 aa).

Composition is skewed to low complexity over residues 1-20 (MAAAGPSTRASSAAAAAALS) and 33-46 (AAKAGAPGPASSPA). The segment at 1 to 46 (MAAAGPSTRASSAAAAAALSRRGRRGRCDEMAAAKAGAPGPASSPA) is disordered. At Ser-12 the chain carries Phosphoserine. The segment at 61–97 (CTGCLETPGEVAALPCSHSRCRGCASRAAGPGCRRCR) adopts an RING-type zinc-finger fold. Residues 100-153 (GSGWARRRARDDGQAAAELMGERARRGQPEPCRPRRDGGAAASGPRPEPEPLAE) are disordered. Residues 119–137 (MGERARRGQPEPCRPRRDG) show a composition bias toward basic and acidic residues. A UMI motif motif is present at residues 192-200 (DDQIHKLLQ). Phosphoserine is present on residues Ser-234 and Ser-236. Lys-273 participates in a covalent cross-link: Glycyl lysine isopeptide (Lys-Gly) (interchain with G-Cter in SUMO2). Position 326 is a phosphoserine (Ser-326). Residue Lys-349 forms a Glycyl lysine isopeptide (Lys-Gly) (interchain with G-Cter in SUMO2) linkage. Phosphoserine is present on residues Ser-390 and Ser-396. At Thr-397 the chain carries Phosphothreonine. A Phosphoserine modification is found at Ser-472. Residue Lys-498 forms a Glycyl lysine isopeptide (Lys-Gly) (interchain with G-Cter in SUMO2) linkage. Positions 515-537 (TCHSSEHGGASSGPSLEREQCEE) are disordered. At Thr-541 the chain carries Phosphothreonine. Position 630 is a phosphoserine (Ser-630). The MIU motif motif lies at 651-668 (QEEEDQQLALQSHRMFDS). The LR motif signature appears at 675–687 (RRKGSVDQYLLRS). Ser-679 is subject to Phosphoserine.

The protein belongs to the RNF169 family. In terms of assembly, interacts with DYRK1B. Post-translationally, phosphorylated by DYRK1A; phosphorylation increases RNF169 ability to block accumulation of TP53BP1 at the DSB sites.

Its subcellular location is the chromosome. It is found in the nucleus. The protein localises to the nucleoplasm. The catalysed reaction is S-ubiquitinyl-[E2 ubiquitin-conjugating enzyme]-L-cysteine + [acceptor protein]-L-lysine = [E2 ubiquitin-conjugating enzyme]-L-cysteine + N(6)-ubiquitinyl-[acceptor protein]-L-lysine.. The protein operates within protein modification; protein ubiquitination. Functionally, probable E3 ubiquitin-protein ligase that acts as a regulator of double-strand breaks (DSBs) repair following DNA damage. Functions in a non-canonical fashion to harness RNF168-mediated protein recruitment to DSB-containing chromatin, thereby contributing to regulation of DSB repair pathway utilization. Once recruited to DSB repair sites by recognizing and binding ubiquitin catalyzed by RNF168, competes with TP53BP1 and BRCA1 for association with RNF168-modified chromatin, thereby favouring homologous recombination repair (HRR) and single-strand annealing (SSA) instead of non-homologous end joining (NHEJ) mediated by TP53BP1. E3 ubiquitin-protein ligase activity is not required for regulation of DSBs repair. In Mus musculus (Mouse), this protein is E3 ubiquitin-protein ligase RNF169 (Rnf169).